Consider the following 57-residue polypeptide: Large ribosomal subunit protein bL32 (57 aa).

The interval 1 to 21 is disordered; the sequence is MAVPKRRTSKKVKNQRRTHKK.

The protein belongs to the bacterial ribosomal protein bL32 family.

In Oceanobacillus iheyensis (strain DSM 14371 / CIP 107618 / JCM 11309 / KCTC 3954 / HTE831), this protein is Large ribosomal subunit protein bL32.